The chain runs to 330 residues: Calponin-3 (330 aa).

N6-acetyllysine is present on lysine 23. The region spanning 26–130 is the Calponin-homology (CH) domain; that stretch reads QQAEEDLRNW…TLVALAGLAK (105 aa). Lysine 158 bears the N6-methyllysine mark. Calponin-like repeat units lie at residues 164–189, 204–229, and 243–268; these read IGLQ…RHLY, ISLQ…RDIY, and ISLQ…RQVY. A disordered region spans residues 279-330; that stretch reads PVIHNGSQGTGTNGSEISDSDYQAEYPDEYHGEYPDEYPREYQYGDDQGIDY. Residues 306-318 show a composition bias toward basic and acidic residues; sequence DEYHGEYPDEYPR.

It belongs to the calponin family.

Functionally, thin filament-associated protein that is implicated in the regulation and modulation of smooth muscle contraction. It is capable of binding to actin, calmodulin and tropomyosin. The interaction of calponin with actin inhibits the actomyosin Mg-ATPase activity. The sequence is that of Calponin-3 (Cnn3) from Rattus norvegicus (Rat).